The primary structure comprises 263 residues: Flagellar L-ring protein (263 aa).

The N-terminal stretch at 1 to 15 (MKRLLCLLLLTTLTG) is a signal peptide. Residue Cys-16 is the site of N-palmitoyl cysteine attachment. A lipid anchor (S-diacylglycerol cysteine) is attached at Cys-16. The segment at 123–143 (KSADAELSKSNDSSMDPLQVG) is disordered.

The protein belongs to the FlgH family. The basal body constitutes a major portion of the flagellar organelle and consists of four rings (L,P,S, and M) mounted on a central rod.

It localises to the cell outer membrane. The protein resides in the bacterial flagellum basal body. Assembles around the rod to form the L-ring and probably protects the motor/basal body from shearing forces during rotation. This Aliivibrio fischeri (strain ATCC 700601 / ES114) (Vibrio fischeri) protein is Flagellar L-ring protein.